We begin with the raw amino-acid sequence, 89 residues long: Small ribosomal subunit protein uS17 (89 aa).

Belongs to the universal ribosomal protein uS17 family. Part of the 30S ribosomal subunit.

Functionally, one of the primary rRNA binding proteins, it binds specifically to the 5'-end of 16S ribosomal RNA. This is Small ribosomal subunit protein uS17 from Chlorobium phaeobacteroides (strain BS1).